Reading from the N-terminus, the 304-residue chain is Acetylglutamate kinase (304 aa).

Substrate-binding positions include 69 to 70 (GG), arginine 91, and asparagine 202.

Belongs to the acetylglutamate kinase family. ArgB subfamily.

The protein localises to the cytoplasm. The enzyme catalyses N-acetyl-L-glutamate + ATP = N-acetyl-L-glutamyl 5-phosphate + ADP. The protein operates within amino-acid biosynthesis; L-arginine biosynthesis; N(2)-acetyl-L-ornithine from L-glutamate: step 2/4. Catalyzes the ATP-dependent phosphorylation of N-acetyl-L-glutamate. In Caulobacter sp. (strain K31), this protein is Acetylglutamate kinase.